A 334-amino-acid polypeptide reads, in one-letter code: Glyceraldehyde-3-phosphate dehydrogenase (334 aa).

NAD(+) contacts are provided by residues 12–13 (RI), D34, and R79. Residues 150 to 152 (SCT), T181, 210 to 211 (TG), and R233 each bind D-glyceraldehyde 3-phosphate. The active-site Nucleophile is C151. N315 provides a ligand contact to NAD(+).

This sequence belongs to the glyceraldehyde-3-phosphate dehydrogenase family. As to quaternary structure, homotetramer.

The protein resides in the cytoplasm. The catalysed reaction is D-glyceraldehyde 3-phosphate + phosphate + NAD(+) = (2R)-3-phospho-glyceroyl phosphate + NADH + H(+). Its pathway is carbohydrate degradation; glycolysis; pyruvate from D-glyceraldehyde 3-phosphate: step 1/5. This chain is Glyceraldehyde-3-phosphate dehydrogenase (GPD), found in Wickerhamomyces ciferrii (strain ATCC 14091 / BCRC 22168 / CBS 111 / JCM 3599 / NBRC 0793 / NRRL Y-1031 F-60-10) (Yeast).